Consider the following 92-residue polypeptide: C-C motif chemokine 3 (92 aa).

Positions methionine 1–serine 23 are cleaved as a signal peptide. 2 disulfides stabilise this stretch: cysteine 34/cysteine 57 and cysteine 35/cysteine 73.

It belongs to the intercrine beta (chemokine CC) family. In terms of assembly, self-associates. Also heterodimer of MIP-1-alpha(4-69) and MIP-1-beta(3-69). Interacts with CCR1.

It localises to the secreted. Monokine with inflammatory and chemokinetic properties. Binds to CCR1, CCR4 and CCR5. One of the major HIV-suppressive factors produced by CD8+ T-cells. Recombinant MIP-1-alpha induces a dose-dependent inhibition of different strains of HIV-1, HIV-2, and simian immunodeficiency virus (SIV). The chain is C-C motif chemokine 3 (Ccl3) from Rattus norvegicus (Rat).